The chain runs to 587 residues: Cyclic GMP-AMP synthase-like receptor (587 aa).

2 disordered regions span residues 26-48 (IHPS…RRDD) and 77-229 (TRMH…DRPL). Basic and acidic residues-rich tracts occupy residues 95–138 (TRDR…RDSL), 150–185 (DGAR…RESL), and 204–228 (PESR…HDRP). Mg(2+)-binding residues include Glu-307, Asp-309, and Asp-409.

It belongs to the mab-21 family. Mg(2+) serves as cofactor. It depends on Mn(2+) as a cofactor.

It carries out the reaction UTP + ATP = 2',3'-cUAMP + 2 diphosphate. Its function is as follows. Nucleotidyltransferase that catalyzes the formation of cyclic UMP-AMP (2',3'-cUAMP) from ATP and UTP and plays a key role in innate immunity. Acts as a key sensor of double-stranded DNA (dsDNA), the presence of dsDNA in the cytoplasm being a danger signal that triggers the immune responses. Directly binds dsDNA, activating the nucleotidyltransferase activity, leading to synthesis of 2',3'-cUAMP, a second messenger that binds to and activates Sting, thereby triggering the immune response via activation of the NF-kappa-B transcription factor. The polypeptide is Cyclic GMP-AMP synthase-like receptor (Magallana gigas (Pacific oyster)).